The following is a 448-amino-acid chain: 3-phosphoshikimate 1-carboxyvinyltransferase (448 aa).

3-phosphoshikimate contacts are provided by lysine 28, serine 29, and arginine 33. Residue lysine 28 participates in phosphoenolpyruvate binding. Residues glycine 100 and arginine 128 each coordinate phosphoenolpyruvate. 3-phosphoshikimate is bound by residues serine 173, glutamine 175, aspartate 326, and lysine 353. Position 175 (glutamine 175) interacts with phosphoenolpyruvate. Aspartate 326 functions as the Proton acceptor in the catalytic mechanism. Residues arginine 357 and arginine 405 each coordinate phosphoenolpyruvate.

The protein belongs to the EPSP synthase family. As to quaternary structure, monomer.

The protein resides in the cytoplasm. The enzyme catalyses 3-phosphoshikimate + phosphoenolpyruvate = 5-O-(1-carboxyvinyl)-3-phosphoshikimate + phosphate. It participates in metabolic intermediate biosynthesis; chorismate biosynthesis; chorismate from D-erythrose 4-phosphate and phosphoenolpyruvate: step 6/7. Catalyzes the transfer of the enolpyruvyl moiety of phosphoenolpyruvate (PEP) to the 5-hydroxyl of shikimate-3-phosphate (S3P) to produce enolpyruvyl shikimate-3-phosphate and inorganic phosphate. The protein is 3-phosphoshikimate 1-carboxyvinyltransferase of Sinorhizobium fredii (strain NBRC 101917 / NGR234).